A 326-amino-acid polypeptide reads, in one-letter code: Phosphate acyltransferase (326 aa).

Belongs to the PlsX family. Homodimer. Probably interacts with PlsY.

It is found in the cytoplasm. The catalysed reaction is a fatty acyl-[ACP] + phosphate = an acyl phosphate + holo-[ACP]. Its pathway is lipid metabolism; phospholipid metabolism. Its function is as follows. Catalyzes the reversible formation of acyl-phosphate (acyl-PO(4)) from acyl-[acyl-carrier-protein] (acyl-ACP). This enzyme utilizes acyl-ACP as fatty acyl donor, but not acyl-CoA. This is Phosphate acyltransferase from Thermus thermophilus (strain ATCC BAA-163 / DSM 7039 / HB27).